Reading from the N-terminus, the 181-residue chain is Probable inosine/xanthosine triphosphatase (181 aa).

Residue Asp65 participates in Mg(2+) binding.

It belongs to the YjjX NTPase family. Homodimer. Requires Mg(2+) as cofactor. Mn(2+) is required as a cofactor.

The catalysed reaction is XTP + H2O = XDP + phosphate + H(+). The enzyme catalyses ITP + H2O = IDP + phosphate + H(+). Phosphatase that hydrolyzes non-canonical purine nucleotides such as XTP and ITP to their respective diphosphate derivatives. Probably excludes non-canonical purines from DNA/RNA precursor pool, thus preventing their incorporation into DNA/RNA and avoiding chromosomal lesions. This is Probable inosine/xanthosine triphosphatase from Caldivirga maquilingensis (strain ATCC 700844 / DSM 13496 / JCM 10307 / IC-167).